The sequence spans 540 residues: Glucose-6-phosphate isomerase (540 aa).

The Proton donor role is filled by E350. Residues H381 and K503 contribute to the active site.

Belongs to the GPI family.

Its subcellular location is the cytoplasm. It carries out the reaction alpha-D-glucose 6-phosphate = beta-D-fructose 6-phosphate. It participates in carbohydrate biosynthesis; gluconeogenesis. The protein operates within carbohydrate degradation; glycolysis; D-glyceraldehyde 3-phosphate and glycerone phosphate from D-glucose: step 2/4. Catalyzes the reversible isomerization of glucose-6-phosphate to fructose-6-phosphate. The sequence is that of Glucose-6-phosphate isomerase from Burkholderia pseudomallei (strain 1106a).